A 742-amino-acid polypeptide reads, in one-letter code: 5-methyltetrahydropteroyltriglutamate--homocysteine methyltransferase (742 aa).

Residues arginine 18–lysine 21 and lysine 112 each bind 5-methyltetrahydropteroyltri-L-glutamate. L-homocysteine is bound by residues isoleucine 420–serine 422 and glutamate 473. Residues isoleucine 420–serine 422 and glutamate 473 each bind L-methionine. Tryptophan 550 is a binding site for 5-methyltetrahydropteroyltri-L-glutamate. Aspartate 588 provides a ligand contact to L-homocysteine. Aspartate 588 serves as a coordination point for L-methionine. A 5-methyltetrahydropteroyltri-L-glutamate-binding site is contributed by glutamate 594. Residues histidine 630, cysteine 632, and glutamate 654 each contribute to the Zn(2+) site. The active-site Proton donor is histidine 683. Position 715 (cysteine 715) interacts with Zn(2+).

Belongs to the vitamin-B12 independent methionine synthase family. Zn(2+) serves as cofactor.

The catalysed reaction is 5-methyltetrahydropteroyltri-L-glutamate + L-homocysteine = tetrahydropteroyltri-L-glutamate + L-methionine. It functions in the pathway amino-acid biosynthesis; L-methionine biosynthesis via de novo pathway; L-methionine from L-homocysteine (MetE route): step 1/1. Functionally, catalyzes the transfer of a methyl group from 5-methyltetrahydrofolate to homocysteine resulting in methionine formation. The polypeptide is 5-methyltetrahydropteroyltriglutamate--homocysteine methyltransferase (Staphylococcus aureus (strain bovine RF122 / ET3-1)).